We begin with the raw amino-acid sequence, 797 residues long: Hid-1 family protein P27G11.12 (797 aa).

This sequence belongs to the hid-1 family.

The protein resides in the cytoplasm. The protein localises to the nucleus. The polypeptide is Hid-1 family protein P27G11.12 (Schizosaccharomyces pombe (strain 972 / ATCC 24843) (Fission yeast)).